A 508-amino-acid polypeptide reads, in one-letter code: MEILNNKTLPELAWLLLGPLVLFYVFKLFIYNVYFHPLRKFPGPWINKISIIPHLYTVFQGKQSYELLKLHRKYGHIVRYGPNELSFSSARAWKDIYGSRPGHQTFVKGTWYDGLSIFAAQDVRSIITERDPTKHAAIARVFGGAFSRSFLNEMEPMINDYIDRFIEHVKTKTANGGVVDLTFGYSSMTFDIIGDLAFGQDFGAIGRETTHPFILELNESLTFTSFHEAIQQFPALGPIARFFFREKVNKLEETARKGGEFALQVMRKRVAEQDTTSRKDFLTKVLEQRASSKVQMSEIQLAAQSWDFIGAGTETTASVMTSTTYYLLRDKKLLAELTAEIRAAFPNADAITNASTEKLELLHRVCLEGLRLPTGAPPILPRLVPKGGDTVDGHFIPGGTPVTIAPMVAALDPLNFKDPLEFKPERWLGKSGDILEASQPFSYGTRGCAGKAIALMEVRVTIAKMLYTFDMELENPDLDWTGNDFNNLLQFGLWVRPLLNVRARLATK.

A helical membrane pass occupies residues 11 to 31 (ELAWLLLGPLVLFYVFKLFIY). Heme is bound at residue Cys-448.

Belongs to the cytochrome P450 family. It depends on heme as a cofactor.

Its subcellular location is the membrane. Its pathway is sesquiterpene biosynthesis. In terms of biological role, cytochrome P450 monooxygenase; part of the minimal biosynthetic bip cluster that mediates the biosynthesis of bridged polycyclic sesquiterpenoids derived from sativene, isosativene, and longifolene. The sesquiterpene cyclase BipA acts as a versatile cyclase that converts farnesyl diphosphate (FPP) into (-)-sativene as the dominant product and (-)-isosativene and (-)-longifolene as minor ones. The cytochrome P450 monooxygenase BipB then hydroxylates different enantiomeric sesquiterpenes, such as (-)-longifolene and (+)-longifolene, at C-15 and C-14. The C-15- or both C-15- and C-14-hydroxylated products are further oxidized by unclustered oxidases, resulting in a structurally diverse array of sesquiterpenoids. The BipB-catalyzed hydroxylation at C-15 serves as an initiator for the oxidation by the unclustered oxidases. This chain is Cytochrome P450 monooxygenase BipB, found in Cochliobolus sativus (Common root rot and spot blotch fungus).